We begin with the raw amino-acid sequence, 341 residues long: MNPQAILARILEQHEIPYEEMIELMRAIMSGNVSPVMTAALVTGLRIKRESIGEISAAAQVMRELAVRIEVPDASHLVDTCGTGGDGCNTFNISTTSAFVAAAAGAQVAKHGGRSVSGKVGSADVLEAIGINLDQTPDQIARSITEVGIGFMFAPNFHHAMKHAAPVRRELGVRTVFNILGPLTNPAGASNQLLGVYHADLTGVLAQVLLRLGSRHAMIVHGSDGLDEITLSGPTKIAELNAGEVREYSVQPEDFGLERAALTSLQVNSTEDAQAMLLSVLDNHPGPARDIVLLNAGAAIYVAGKADSWARGVETARDMLASGAAKQKMQALVEFSNQVSA.

Residues G82, 85–86 (GD), T90, 92–95 (NIST), 110–118 (KHGGRSVSG), and S122 each bind 5-phospho-alpha-D-ribose 1-diphosphate. G82 serves as a coordination point for anthranilate. S94 contacts Mg(2+). R168 is a binding site for anthranilate. Mg(2+)-binding residues include D227 and E228.

This sequence belongs to the anthranilate phosphoribosyltransferase family. As to quaternary structure, homodimer. It depends on Mg(2+) as a cofactor.

It catalyses the reaction N-(5-phospho-beta-D-ribosyl)anthranilate + diphosphate = 5-phospho-alpha-D-ribose 1-diphosphate + anthranilate. It participates in amino-acid biosynthesis; L-tryptophan biosynthesis; L-tryptophan from chorismate: step 2/5. In terms of biological role, catalyzes the transfer of the phosphoribosyl group of 5-phosphorylribose-1-pyrophosphate (PRPP) to anthranilate to yield N-(5'-phosphoribosyl)-anthranilate (PRA). This Nitrosomonas europaea (strain ATCC 19718 / CIP 103999 / KCTC 2705 / NBRC 14298) protein is Anthranilate phosphoribosyltransferase.